Reading from the N-terminus, the 498-residue chain is Probable cytosol aminopeptidase (498 aa).

Mn(2+)-binding residues include lysine 267 and aspartate 272. Lysine 279 is an active-site residue. Residues aspartate 290, aspartate 349, and glutamate 351 each contribute to the Mn(2+) site. The active site involves arginine 353.

This sequence belongs to the peptidase M17 family. The cofactor is Mn(2+).

It localises to the cytoplasm. The enzyme catalyses Release of an N-terminal amino acid, Xaa-|-Yaa-, in which Xaa is preferably Leu, but may be other amino acids including Pro although not Arg or Lys, and Yaa may be Pro. Amino acid amides and methyl esters are also readily hydrolyzed, but rates on arylamides are exceedingly low.. The catalysed reaction is Release of an N-terminal amino acid, preferentially leucine, but not glutamic or aspartic acids.. Functionally, presumably involved in the processing and regular turnover of intracellular proteins. Catalyzes the removal of unsubstituted N-terminal amino acids from various peptides. This Dechloromonas aromatica (strain RCB) protein is Probable cytosol aminopeptidase.